The following is a 190-amino-acid chain: Protein hunchback (190 aa).

Disordered regions lie at residues 13–59 (EPMS…SSNL), 86–110 (AAMT…PNPM), and 142–190 (QTND…KYMA). Residues 17–31 (HHHHHSHHHGHHHML) show a composition bias toward basic residues. A compositionally biased stretch (polar residues) spans 90 to 100 (PSPSNNDQNSP). Residues 171–190 (EPEKDHDLISNSSEDMKYMA) show a composition bias toward basic and acidic residues.

This sequence belongs to the hunchback C2H2-type zinc-finger protein family.

The protein localises to the nucleus. Gap class segmentation protein that controls development of head structures. The sequence is that of Protein hunchback (hb) from Scaptomyza crassifemur (Fruit fly).